A 614-amino-acid polypeptide reads, in one-letter code: Methionine--tRNA ligase (614 aa).

The short motif at 11–21 (PYTNGPRHIGH) is the 'HIGH' region element. Zn(2+)-binding residues include Cys143, Cys146, Cys156, and Cys159. The short motif at 359–363 (QFSTS) is the 'KMSKS' region element. Thr362 is an ATP binding site.

It belongs to the class-I aminoacyl-tRNA synthetase family. MetG type 1 subfamily. In terms of assembly, monomer. Zn(2+) serves as cofactor.

The protein localises to the cytoplasm. It catalyses the reaction tRNA(Met) + L-methionine + ATP = L-methionyl-tRNA(Met) + AMP + diphosphate. Functionally, is required not only for elongation of protein synthesis but also for the initiation of all mRNA translation through initiator tRNA(fMet) aminoacylation. The protein is Methionine--tRNA ligase of Beutenbergia cavernae (strain ATCC BAA-8 / DSM 12333 / CCUG 43141 / JCM 11478 / NBRC 16432 / NCIMB 13614 / HKI 0122).